Reading from the N-terminus, the 210-residue chain is Large ribosomal subunit protein uL3 (210 aa).

Belongs to the universal ribosomal protein uL3 family. As to quaternary structure, part of the 50S ribosomal subunit. Forms a cluster with proteins L14 and L19.

One of the primary rRNA binding proteins, it binds directly near the 3'-end of the 23S rRNA, where it nucleates assembly of the 50S subunit. In Natranaerobius thermophilus (strain ATCC BAA-1301 / DSM 18059 / JW/NM-WN-LF), this protein is Large ribosomal subunit protein uL3.